A 110-amino-acid polypeptide reads, in one-letter code: Integration host factor subunit alpha (110 aa).

The protein belongs to the bacterial histone-like protein family. Heterodimer of an alpha and a beta chain.

Its function is as follows. This protein is one of the two subunits of integration host factor, a specific DNA-binding protein that functions in genetic recombination as well as in transcriptional and translational control. In Nitrobacter hamburgensis (strain DSM 10229 / NCIMB 13809 / X14), this protein is Integration host factor subunit alpha.